The chain runs to 524 residues: uncharacterized protein (524 aa).

A compositionally biased stretch (polar residues) spans 83–101 (NSTPSKQAKPLQRNSPYQG). Disordered regions lie at residues 83 to 108 (NSTP…SENQ) and 155 to 179 (PPCN…KRPR).

The protein localises to the cytoplasm. This is an uncharacterized protein from Saccharomyces cerevisiae (strain ATCC 204508 / S288c) (Baker's yeast).